The primary structure comprises 410 residues: Aspartate aminotransferase (410 aa).

Gly-47, Trp-135, and Asn-185 together coordinate L-aspartate. Lys-249 carries the post-translational modification N6-(pyridoxal phosphate)lysine. An L-aspartate-binding site is contributed by Arg-385.

Belongs to the class-I pyridoxal-phosphate-dependent aminotransferase family. Homodimer. Pyridoxal 5'-phosphate is required as a cofactor.

It localises to the cytoplasm. It carries out the reaction L-aspartate + 2-oxoglutarate = oxaloacetate + L-glutamate. Its function is as follows. Catalyzes the reversible conversion of aspartate and 2-oxoglutarate to glutamate and oxaloacetate. In Rhizobium meliloti (Ensifer meliloti), this protein is Aspartate aminotransferase.